The chain runs to 390 residues: UPF0229 protein OB2647 (390 aa).

A disordered region spans residues 99–121; that stretch reads NASQQGQQGQGNGKKAGDQPGTD.

Belongs to the UPF0229 family.

The polypeptide is UPF0229 protein OB2647 (Oceanobacillus iheyensis (strain DSM 14371 / CIP 107618 / JCM 11309 / KCTC 3954 / HTE831)).